Reading from the N-terminus, the 179-residue chain is MAKKKVKYTFDYDSKFLNEHNVKKLAYELTHDSDTSNKILDCLFTAEVTDEQIAEATGIKLNFVRKILYKFYDVGMANYTRKKDPETQWFTYYWRFDSRKAAQILEKQYNHHNQEIKESIEYEENNMFFVCPNGCRYPFDEATEFQFICPRCNEKLEFKDNSDLIHDLKKLESAYKINE.

An HTH TFE/IIEalpha-type domain is found at 1–102 (MAKKKVKYTF…YWRFDSRKAA (102 aa)).

This sequence belongs to the TFE family. In terms of assembly, monomer. Interaction with RNA polymerase subunits RpoF and RpoE is necessary for Tfe stimulatory transcription activity. Able to interact with Tbp and RNA polymerase in the absence of DNA promoter. Interacts both with the preinitiation and elongation complexes.

Functionally, transcription factor that plays a role in the activation of archaeal genes transcribed by RNA polymerase. Facilitates transcription initiation by enhancing TATA-box recognition by TATA-box-binding protein (Tbp), and transcription factor B (Tfb) and RNA polymerase recruitment. Not absolutely required for transcription in vitro, but particularly important in cases where Tbp or Tfb function is not optimal. It dynamically alters the nucleic acid-binding properties of RNA polymerases by stabilizing the initiation complex and destabilizing elongation complexes. Seems to translocate with the RNA polymerase following initiation and acts by binding to the non template strand of the transcription bubble in elongation complexes. This chain is Transcription factor E, found in Methanosphaera stadtmanae (strain ATCC 43021 / DSM 3091 / JCM 11832 / MCB-3).